The sequence spans 50 residues: Small ribosomal subunit protein uS14 (50 aa).

Zn(2+) contacts are provided by C15, C18, C33, and C36.

Belongs to the universal ribosomal protein uS14 family. Zinc-binding uS14 subfamily. Part of the 30S ribosomal subunit. It depends on Zn(2+) as a cofactor.

Functionally, binds 16S rRNA, required for the assembly of 30S particles. The chain is Small ribosomal subunit protein uS14 from Methanosarcina acetivorans (strain ATCC 35395 / DSM 2834 / JCM 12185 / C2A).